A 392-amino-acid polypeptide reads, in one-letter code: UDP-N-acetylglucosamine--N-acetylmuramyl-(pentapeptide) pyrophosphoryl-undecaprenol N-acetylglucosamine transferase (392 aa).

Residues 14–16, Asn124, Arg167, Ser195, Ile251, and Gln296 contribute to the UDP-N-acetyl-alpha-D-glucosamine site; that span reads TGG.

The protein belongs to the glycosyltransferase 28 family. MurG subfamily.

It localises to the cell inner membrane. It catalyses the reaction di-trans,octa-cis-undecaprenyl diphospho-N-acetyl-alpha-D-muramoyl-L-alanyl-D-glutamyl-meso-2,6-diaminopimeloyl-D-alanyl-D-alanine + UDP-N-acetyl-alpha-D-glucosamine = di-trans,octa-cis-undecaprenyl diphospho-[N-acetyl-alpha-D-glucosaminyl-(1-&gt;4)]-N-acetyl-alpha-D-muramoyl-L-alanyl-D-glutamyl-meso-2,6-diaminopimeloyl-D-alanyl-D-alanine + UDP + H(+). It participates in cell wall biogenesis; peptidoglycan biosynthesis. Cell wall formation. Catalyzes the transfer of a GlcNAc subunit on undecaprenyl-pyrophosphoryl-MurNAc-pentapeptide (lipid intermediate I) to form undecaprenyl-pyrophosphoryl-MurNAc-(pentapeptide)GlcNAc (lipid intermediate II). In Sphingopyxis alaskensis (strain DSM 13593 / LMG 18877 / RB2256) (Sphingomonas alaskensis), this protein is UDP-N-acetylglucosamine--N-acetylmuramyl-(pentapeptide) pyrophosphoryl-undecaprenol N-acetylglucosamine transferase.